We begin with the raw amino-acid sequence, 88 residues long: MANNYRYVEAVRDAEGFIIDGDYAAWDCSRCGHEAQRYRGQSDVDCRNCGACYNASGQRLRDDWRGNPSAWDDEVGDLEGFELQHSDY.

The sequence is that of Gene 86 protein (86) from Mycobacterium phage D29 (Mycobacteriophage D29).